The chain runs to 510 residues: 2,3-bisphosphoglycerate-independent phosphoglycerate mutase (510 aa).

Mn(2+) is bound by residues Asp-12 and Ser-62. The active-site Phosphoserine intermediate is the Ser-62. Substrate is bound by residues His-123, 153–154 (RD), Arg-185, Arg-191, 261–264 (RPDR), and Lys-336. Asp-403, His-407, Asp-444, His-445, and His-462 together coordinate Mn(2+).

Belongs to the BPG-independent phosphoglycerate mutase family. In terms of assembly, monomer. Requires Mn(2+) as cofactor.

It carries out the reaction (2R)-2-phosphoglycerate = (2R)-3-phosphoglycerate. It functions in the pathway carbohydrate degradation; glycolysis; pyruvate from D-glyceraldehyde 3-phosphate: step 3/5. Essential for rapid growth and for sporulation. Catalyzes the interconversion of 2-phosphoglycerate and 3-phosphoglycerate. In Priestia megaterium (strain DSM 319 / IMG 1521) (Bacillus megaterium), this protein is 2,3-bisphosphoglycerate-independent phosphoglycerate mutase.